The following is a 272-amino-acid chain: uncharacterized protein (272 aa).

Residues 1 to 20 form the signal peptide; it reads MKLRKIFLLPLISLSTLSVA. The N-palmitoyl cysteine moiety is linked to residue cysteine 21. The S-diacylglycerol cysteine moiety is linked to residue cysteine 21.

This sequence belongs to the MG439/MG440 family.

Its subcellular location is the cell membrane. This is an uncharacterized protein from Mycoplasma genitalium (strain ATCC 33530 / DSM 19775 / NCTC 10195 / G37) (Mycoplasmoides genitalium).